The following is a 105-amino-acid chain: MSGKTITRAQLSEAVYQEVGLSRNESADLLEMVLNEMSEALVEGDTVKISSFGSFSVREKGERVGRNPKTGEEVPILPRRVLVFRPSQLLKARINDGAVGSQING.

This sequence belongs to the bacterial histone-like protein family. Heterodimer of an alpha and a beta chain.

In terms of biological role, this protein is one of the two subunits of integration host factor, a specific DNA-binding protein that functions in genetic recombination as well as in transcriptional and translational control. The sequence is that of Integration host factor subunit alpha from Rhodospirillum rubrum (strain ATCC 11170 / ATH 1.1.1 / DSM 467 / LMG 4362 / NCIMB 8255 / S1).